The sequence spans 580 residues: Dihydroxy-acid dehydratase (580 aa).

A disordered region spans residues 1–31; the sequence is MPSGSSESPADALRASDSTPDIKPRSRDVTD. The segment covering 20–31 has biased composition (basic and acidic residues); it reads PDIKPRSRDVTD. Cys-69 lines the [2Fe-2S] cluster pocket. Residue Asp-101 participates in Mg(2+) binding. Cys-142 provides a ligand contact to [2Fe-2S] cluster. Mg(2+) contacts are provided by Asp-143 and Lys-144. Residue Lys-144 is modified to N6-carboxylysine. A [2Fe-2S] cluster-binding site is contributed by Cys-219. Mg(2+) is bound at residue Glu-470. The active-site Proton acceptor is Ser-496.

This sequence belongs to the IlvD/Edd family. Homodimer. It depends on [2Fe-2S] cluster as a cofactor. Mg(2+) serves as cofactor.

It carries out the reaction (2R)-2,3-dihydroxy-3-methylbutanoate = 3-methyl-2-oxobutanoate + H2O. It catalyses the reaction (2R,3R)-2,3-dihydroxy-3-methylpentanoate = (S)-3-methyl-2-oxopentanoate + H2O. It functions in the pathway amino-acid biosynthesis; L-isoleucine biosynthesis; L-isoleucine from 2-oxobutanoate: step 3/4. It participates in amino-acid biosynthesis; L-valine biosynthesis; L-valine from pyruvate: step 3/4. In terms of biological role, functions in the biosynthesis of branched-chain amino acids. Catalyzes the dehydration of (2R,3R)-2,3-dihydroxy-3-methylpentanoate (2,3-dihydroxy-3-methylvalerate) into 2-oxo-3-methylpentanoate (2-oxo-3-methylvalerate) and of (2R)-2,3-dihydroxy-3-methylbutanoate (2,3-dihydroxyisovalerate) into 2-oxo-3-methylbutanoate (2-oxoisovalerate), the penultimate precursor to L-isoleucine and L-valine, respectively. The protein is Dihydroxy-acid dehydratase of Mycobacterium sp. (strain JLS).